Here is a 294-residue protein sequence, read N- to C-terminus: Putative S-adenosyl-L-methionine-dependent methyltransferase RHA1_ro00605 (294 aa).

Residues D120 and 149–150 (DL) contribute to the S-adenosyl-L-methionine site.

The protein belongs to the UPF0677 family.

In terms of biological role, exhibits S-adenosyl-L-methionine-dependent methyltransferase activity. In Rhodococcus jostii (strain RHA1), this protein is Putative S-adenosyl-L-methionine-dependent methyltransferase RHA1_ro00605.